The primary structure comprises 192 residues: Phosphoheptose isomerase (192 aa).

The region spanning 37 to 192 (LADSFKGGGK…IQLIEKEMVK (156 aa)) is the SIS domain. A substrate-binding site is contributed by 52-54 (NGG). Zn(2+) contacts are provided by His-61 and Glu-65. Substrate is bound by residues Glu-65, 93–94 (ND), 119–121 (STS), Ser-124, and Gln-172. The Zn(2+) site is built by Gln-172 and His-180.

This sequence belongs to the SIS family. GmhA subfamily. Homotetramer. Zn(2+) is required as a cofactor.

It is found in the cytoplasm. It catalyses the reaction 2 D-sedoheptulose 7-phosphate = D-glycero-alpha-D-manno-heptose 7-phosphate + D-glycero-beta-D-manno-heptose 7-phosphate. It functions in the pathway carbohydrate biosynthesis; D-glycero-D-manno-heptose 7-phosphate biosynthesis; D-glycero-alpha-D-manno-heptose 7-phosphate and D-glycero-beta-D-manno-heptose 7-phosphate from sedoheptulose 7-phosphate: step 1/1. Catalyzes the isomerization of sedoheptulose 7-phosphate in D-glycero-D-manno-heptose 7-phosphate. This is Phosphoheptose isomerase from Escherichia coli O7:K1 (strain IAI39 / ExPEC).